We begin with the raw amino-acid sequence, 154 residues long: 3-hydroxyacyl-[acyl-carrier-protein] dehydratase FabZ (154 aa).

His-59 is a catalytic residue.

Belongs to the thioester dehydratase family. FabZ subfamily.

It localises to the cytoplasm. It catalyses the reaction a (3R)-hydroxyacyl-[ACP] = a (2E)-enoyl-[ACP] + H2O. Involved in unsaturated fatty acids biosynthesis. Catalyzes the dehydration of short chain beta-hydroxyacyl-ACPs and long chain saturated and unsaturated beta-hydroxyacyl-ACPs. The sequence is that of 3-hydroxyacyl-[acyl-carrier-protein] dehydratase FabZ from Bartonella bacilliformis (strain ATCC 35685 / KC583 / Herrer 020/F12,63).